A 54-amino-acid polypeptide reads, in one-letter code: Snake venom 5'-nucleotidase (54 aa).

Zn(2+) contacts are provided by Asp-11 and His-13. An N-linked (GlcNAc...) asparagine glycan is attached at Asn-46.

Belongs to the 5'-nucleotidase family. It depends on Zn(2+) as a cofactor. In terms of processing, venom 5'-nucleotidases (or a part thereof) may be released into the venom via exosome-like vesicles. They may be attached via a GPI anchor to the membrane of these vesicles. Soluble forms of 5'-nucleotidase might be released by cleavage of the ectodomain in the exosome-like vesicles or venom gland cells. In terms of tissue distribution, expressed by the venom gland.

It localises to the membrane. The catalysed reaction is a ribonucleoside 5'-phosphate + H2O = a ribonucleoside + phosphate. Hydrolyzes nucleotides into nucleosides. Snake venom 5'-nucleotidases are widely distributed among venomous snake taxa, but there is a lack of information about their biological activities. They have been shown to inhibit platelet aggregation. This effect may be due to the liberation of inhibitory AMP or adenosine by its action on ADP released upon initiation of aggregation. Venom 5'-nucleotidases are also known to synergistically act in vivo with other toxins like ADPases, phospholipases, and disintegrins to exert a more pronounced anti-coagulant effect. This chain is Snake venom 5'-nucleotidase, found in Gloydius blomhoffii blomhoffii (Japanese mamushi).